Consider the following 202-residue polypeptide: NAD(P)H-quinone oxidoreductase subunit I (202 aa).

4Fe-4S ferredoxin-type domains are found at residues 55–84 and 95–124; these read GRIH…VDWV and KNYS…MTEE. Residues Cys-64, Cys-67, Cys-70, Cys-74, Cys-104, Cys-107, Cys-110, and Cys-114 each contribute to the [4Fe-4S] cluster site. The segment covering 168-187 has biased composition (basic and acidic residues); the sequence is EYDPHVVPSDRPRAGQRPEE. The tract at residues 168–202 is disordered; that stretch reads EYDPHVVPSDRPRAGQRPEELVDQYKQAAAANEEN.

Belongs to the complex I 23 kDa subunit family. In terms of assembly, NDH-1 is composed of at least 11 different subunits. [4Fe-4S] cluster serves as cofactor.

The protein localises to the cellular thylakoid membrane. The enzyme catalyses a plastoquinone + NADH + (n+1) H(+)(in) = a plastoquinol + NAD(+) + n H(+)(out). It catalyses the reaction a plastoquinone + NADPH + (n+1) H(+)(in) = a plastoquinol + NADP(+) + n H(+)(out). Its function is as follows. NDH-1 shuttles electrons from an unknown electron donor, via FMN and iron-sulfur (Fe-S) centers, to quinones in the respiratory and/or the photosynthetic chain. The immediate electron acceptor for the enzyme in this species is believed to be plastoquinone. Couples the redox reaction to proton translocation, and thus conserves the redox energy in a proton gradient. This chain is NAD(P)H-quinone oxidoreductase subunit I, found in Synechococcus elongatus (strain ATCC 33912 / PCC 7942 / FACHB-805) (Anacystis nidulans R2).